Consider the following 106-residue polypeptide: Small ribosomal subunit protein uS10 (106 aa).

The protein belongs to the universal ribosomal protein uS10 family. In terms of assembly, part of the 30S ribosomal subunit.

Involved in the binding of tRNA to the ribosomes. In Wolbachia pipientis subsp. Culex pipiens (strain wPip), this protein is Small ribosomal subunit protein uS10.